We begin with the raw amino-acid sequence, 146 residues long: Hemoglobin subunit beta (146 aa).

Valine 1 is modified (N-acetylvaline). One can recognise a Globin domain in the interval histidine 2–histidine 146. Histidine 63 is a heme b binding site. Lysine 82 carries the N6-acetyllysine modification. Histidine 92 is a binding site for heme b. S-nitrosocysteine is present on cysteine 93. Lysine 144 bears the N6-acetyllysine mark.

Belongs to the globin family. Heterotetramer of two alpha chains and two beta chains. As to expression, red blood cells.

Involved in oxygen transport from the lung to the various peripheral tissues. The polypeptide is Hemoglobin subunit beta (HBB) (Cavia porcellus (Guinea pig)).